A 125-amino-acid chain; its full sequence is MIKKTQGTEIRALARHIGMSAQKARRVIDQIRGCSYEQTLMILELMPYRACYPIFKLVYSAAANASHNRGLKEADLFISKAEVNEGVIVKRLKPQARGRSYPIKRPTCHITIVLSERPNFTLKNI.

Belongs to the universal ribosomal protein uL22 family. Part of the 50S ribosomal subunit.

The protein resides in the plastid. It is found in the chloroplast. Functionally, this protein binds specifically to 23S rRNA. Its function is as follows. The globular domain of the protein is located near the polypeptide exit tunnel on the outside of the subunit, while an extended beta-hairpin is found that lines the wall of the exit tunnel in the center of the 70S ribosome. In Nuphar advena (Common spatterdock), this protein is Large ribosomal subunit protein uL22c (rpl22).